The sequence spans 91 residues: Small ribosomal subunit protein uS19 (91 aa).

The protein belongs to the universal ribosomal protein uS19 family.

In terms of biological role, protein S19 forms a complex with S13 that binds strongly to the 16S ribosomal RNA. This chain is Small ribosomal subunit protein uS19, found in Azotobacter vinelandii (strain DJ / ATCC BAA-1303).